We begin with the raw amino-acid sequence, 200 residues long: Recombination protein RecR (200 aa).

The segment at 58 to 73 adopts a C4-type zinc-finger fold; sequence CEVCHNLAEEGLCAIC. Residues 81–176 enclose the Toprim domain; the sequence is GLICVVEEPV…DISRLAYGMP (96 aa).

This sequence belongs to the RecR family.

Its function is as follows. May play a role in DNA repair. It seems to be involved in an RecBC-independent recombinational process of DNA repair. It may act with RecF and RecO. This is Recombination protein RecR from Magnetococcus marinus (strain ATCC BAA-1437 / JCM 17883 / MC-1).